We begin with the raw amino-acid sequence, 23 residues long: Nephrotoxin PsTX-115 (23 aa).

It is found in the secreted. Its subcellular location is the nematocyst. Its function is as follows. Nephrotoxin. When injected intravenously in rats, causes severe destructive glomerular changes. At 24 hours post-injection partial disruption of the glomerular basement membrane, massive thrombus formation in glomerular capillaries, severe mesangiolysis and infiltrating cells were observed in the majority of glomeruli. In Phyllodiscus semoni (Night anemone), this protein is Nephrotoxin PsTX-115.